Consider the following 338-residue polypeptide: uncharacterized protein (338 aa).

The interval 1–20 is disordered; sequence MYNNNQNHHNNDNNMNKDEP. Residues 9–20 are compositionally biased toward basic and acidic residues; sequence HNNDNNMNKDEP. N-linked (GlcNAc...) asparagine glycosylation is found at Asn37, Asn83, Asn97, Asn105, Asn114, and Asn122. Positions 55–92 are disordered; the sequence is VNSGNNNNNNNNNNNNNNNNNNNNNNNNNDSIVINMDT. Residues 59–92 are compositionally biased toward low complexity; the sequence is NNNNNNNNNNNNNNNNNNNNNNNNNDSIVINMDT. Helical transmembrane passes span 148 to 168, 178 to 198, and 202 to 222; these read YKKF…IVLI, FHAY…FLLI, and ILSI…FLKV. Residues Asn229, Asn240, Asn286, Asn302, Asn317, and Asn322 are each glycosylated (N-linked (GlcNAc...) asparagine). 2 disordered regions span residues 279 to 303 and 316 to 338; these read SNLN…NSNS and LNSS…TNEE. Low complexity predominate over residues 280-294; the sequence is NLNRNNNNSNNVNNN. Residues 316-327 show a composition bias toward low complexity; that stretch reads LNSSGSNSSIYS. Residues 328-338 are compositionally biased toward polar residues; that stretch reads DVQNDIGTNEE.

It localises to the membrane. This is an uncharacterized protein from Dictyostelium discoideum (Social amoeba).